The following is a 311-amino-acid chain: Homeobox-leucine zipper protein HOX1 (311 aa).

Disordered stretches follow at residues 29-69 (AGGA…SDHR) and 97-160 (AETT…KKLR). Low complexity predominate over residues 119-145 (SSPNSTLSSLSGKRGAPSAATAAAAAA). A DNA-binding region (homeobox) is located at residues 154–213 (GSRKKLRLSKDQAAVLEDTFKEHNTLNPKQKAALARQLNLKPRQVEVWFQNRRARTKLKQ). Residues 212 to 256 (KQTEVDCELLKRCCETLTDENRRLHRELQELRALKLATAAAAPHH) are leucine-zipper. Positions 279-311 (SAATTTRNNSGAAPARPVPTRPWPPAAAQRSSA) are disordered. Polar residues predominate over residues 280–289 (AATTTRNNSG). Pro residues predominate over residues 294–303 (RPVPTRPWPP).

The protein belongs to the HD-ZIP homeobox family. Class II subfamily. In terms of assembly, homodimer. May form a heterodimer with HOX2, HOX3 or HOX7. As to expression, expressed in root provascular and vascular cylinder, provascular and vascular strands of leaves, provascular and vascular strands of the whole panicle, in mature embryo provascular bundles of scutellum and embryonic axis and provascular and vascular strands of young immature spikelet organs. Expressed in differentiating and differentiated xylem and phloem elements, and in outer and inner bundle sheath cells of all vascular bundles. Expressed in auricles, ligules, culm, guard cells brac hairs and pollen.

It localises to the nucleus. Functionally, probable transcription repressor involved leaf development. Binds to the DNA sequence 5'-CAAT[GC]ATTG-3'. May act as a regulatory switch to specify provascular cell fate. This chain is Homeobox-leucine zipper protein HOX1 (HOX1), found in Oryza sativa subsp. indica (Rice).